The primary structure comprises 32 residues: Protamine-3A (32 aa).

The interval 1–32 (PRRRRRSSSRPIRRRRRPRVSRRRRRGGRRRR) is disordered.

In terms of tissue distribution, testis.

The protein resides in the nucleus. Its subcellular location is the chromosome. Protamines substitute for histones in the chromatin of sperm during the haploid phase of spermatogenesis. They compact sperm DNA into a highly condensed, stable and inactive complex. This is Protamine-3A from Oncorhynchus mykiss (Rainbow trout).